The following is a 364-amino-acid chain: Cobalt-precorrin-5B C(1)-methyltransferase (364 aa).

It belongs to the CbiD family.

It carries out the reaction Co-precorrin-5B + S-adenosyl-L-methionine = Co-precorrin-6A + S-adenosyl-L-homocysteine. It functions in the pathway cofactor biosynthesis; adenosylcobalamin biosynthesis; cob(II)yrinate a,c-diamide from sirohydrochlorin (anaerobic route): step 6/10. In terms of biological role, catalyzes the methylation of C-1 in cobalt-precorrin-5B to form cobalt-precorrin-6A. This chain is Cobalt-precorrin-5B C(1)-methyltransferase, found in Pseudomonas putida (strain ATCC 47054 / DSM 6125 / CFBP 8728 / NCIMB 11950 / KT2440).